Reading from the N-terminus, the 336-residue chain is Dihydroorotate dehydrogenase (quinone) (336 aa).

FMN-binding positions include 62-66 and Thr86; that span reads AGLDK. Lys66 contributes to the substrate binding site. 111-115 serves as a coordination point for substrate; it reads NRMGF. 2 residues coordinate FMN: Asn139 and Asn172. Residue Asn172 coordinates substrate. The active-site Nucleophile is the Ser175. Position 177 (Asn177) interacts with substrate. Lys217 and Thr245 together coordinate FMN. 246–247 provides a ligand contact to substrate; sequence NT. FMN-binding positions include Gly268, Gly297, and 318–319; that span reads YS.

It belongs to the dihydroorotate dehydrogenase family. Type 2 subfamily. As to quaternary structure, monomer. It depends on FMN as a cofactor.

The protein resides in the cell membrane. The catalysed reaction is (S)-dihydroorotate + a quinone = orotate + a quinol. It participates in pyrimidine metabolism; UMP biosynthesis via de novo pathway; orotate from (S)-dihydroorotate (quinone route): step 1/1. Functionally, catalyzes the conversion of dihydroorotate to orotate with quinone as electron acceptor. This is Dihydroorotate dehydrogenase (quinone) from Salmonella typhi.